The following is a 782-amino-acid chain: Translation initiation factor IF-2 (782 aa).

The segment at 47 to 196 is disordered; that stretch reads DNAIDGTNKK…TPPKPKELPE (150 aa). Positions 53 to 65 are enriched in basic and acidic residues; that stretch reads TNKKAEAPKKETT. The segment covering 66-81 has biased composition (polar residues); that stretch reads SNENGNSKGPNKPNMT. Composition is skewed to low complexity over residues 82-93 and 118-170; these read NSNEKSNKPNNP and NTSK…NNKG. One can recognise a tr-type G domain in the interval 283–452; the sequence is ERPPVVTIMG…LLVSEVEELK (170 aa). The segment at 292-299 is G1; the sequence is GHVDHGKT. 292–299 provides a ligand contact to GTP; the sequence is GHVDHGKT. The segment at 317–321 is G2; the sequence is GITQH. Positions 338 to 341 are G3; it reads DTPG. Residues 338–342 and 392–395 each bind GTP; these read DTPGH and NKID. Residues 392-395 are G4; it reads NKID. Positions 428–430 are G5; the sequence is SAK.

This sequence belongs to the TRAFAC class translation factor GTPase superfamily. Classic translation factor GTPase family. IF-2 subfamily.

It localises to the cytoplasm. In terms of biological role, one of the essential components for the initiation of protein synthesis. Protects formylmethionyl-tRNA from spontaneous hydrolysis and promotes its binding to the 30S ribosomal subunits. Also involved in the hydrolysis of GTP during the formation of the 70S ribosomal complex. The sequence is that of Translation initiation factor IF-2 from Listeria monocytogenes serotype 4b (strain CLIP80459).